The primary structure comprises 274 residues: Sulfur carrier protein FdhD (274 aa).

The Cysteine persulfide intermediate role is filled by Cys-121. Mo-bis(molybdopterin guanine dinucleotide) is bound at residue 258 to 263 (FSKPGR).

Belongs to the FdhD family.

The protein resides in the cytoplasm. Functionally, required for formate dehydrogenase (FDH) activity. Acts as a sulfur carrier protein that transfers sulfur from IscS to the molybdenum cofactor prior to its insertion into FDH. The protein is Sulfur carrier protein FdhD of Yersinia pseudotuberculosis serotype IB (strain PB1/+).